Consider the following 68-residue polypeptide: DLITNSYTRGKPRHVTSWRNLRTRDVCKKSPGKCIHNGCFCEQDKPQGNCCDSGGCTVKWWCPGTKGD.

The propeptide occupies 1 to 23 (DLITNSYTRGKPRHVTSWRNLRT).

Post-translationally, contains 4 disulfide bonds. In terms of tissue distribution, expressed by the venom duct.

It is found in the secreted. The protein is Conotoxin Cal12.1p1 of Californiconus californicus (California cone).